The chain runs to 216 residues: Imidazole glycerol phosphate synthase subunit HisH (216 aa).

The 215-residue stretch at 2–216 (RVAIIDYGSG…LITNFLRWRP (215 aa)) folds into the Glutamine amidotransferase type-1 domain. Residue cysteine 88 is the Nucleophile of the active site. Catalysis depends on residues histidine 196 and glutamate 198.

Heterodimer of HisH and HisF.

It is found in the cytoplasm. It carries out the reaction 5-[(5-phospho-1-deoxy-D-ribulos-1-ylimino)methylamino]-1-(5-phospho-beta-D-ribosyl)imidazole-4-carboxamide + L-glutamine = D-erythro-1-(imidazol-4-yl)glycerol 3-phosphate + 5-amino-1-(5-phospho-beta-D-ribosyl)imidazole-4-carboxamide + L-glutamate + H(+). The catalysed reaction is L-glutamine + H2O = L-glutamate + NH4(+). Its pathway is amino-acid biosynthesis; L-histidine biosynthesis; L-histidine from 5-phospho-alpha-D-ribose 1-diphosphate: step 5/9. Its function is as follows. IGPS catalyzes the conversion of PRFAR and glutamine to IGP, AICAR and glutamate. The HisH subunit catalyzes the hydrolysis of glutamine to glutamate and ammonia as part of the synthesis of IGP and AICAR. The resulting ammonia molecule is channeled to the active site of HisF. The sequence is that of Imidazole glycerol phosphate synthase subunit HisH from Mesorhizobium japonicum (strain LMG 29417 / CECT 9101 / MAFF 303099) (Mesorhizobium loti (strain MAFF 303099)).